The following is a 46-amino-acid chain: Large ribosomal subunit protein bL33A (46 aa).

Belongs to the bacterial ribosomal protein bL33 family.

This chain is Large ribosomal subunit protein bL33A, found in Mesomycoplasma hyopneumoniae (strain 7448) (Mycoplasma hyopneumoniae).